The following is a 99-amino-acid chain: NADH-quinone oxidoreductase subunit K (99 aa).

A run of 3 helical transmembrane segments spans residues 3–23, 28–48, and 59–79; these read PENY…GVLI, IIVF…FVTF, and VFAF…LAII.

This sequence belongs to the complex I subunit 4L family. NDH-1 is composed of 14 different subunits. Subunits NuoA, H, J, K, L, M, N constitute the membrane sector of the complex.

Its subcellular location is the cell membrane. The enzyme catalyses a quinone + NADH + 5 H(+)(in) = a quinol + NAD(+) + 4 H(+)(out). Its function is as follows. NDH-1 shuttles electrons from NADH, via FMN and iron-sulfur (Fe-S) centers, to quinones in the respiratory chain. The immediate electron acceptor for the enzyme in this species is believed to be a menaquinone. Couples the redox reaction to proton translocation (for every two electrons transferred, four hydrogen ions are translocated across the cytoplasmic membrane), and thus conserves the redox energy in a proton gradient. This Rhodococcus jostii (strain RHA1) protein is NADH-quinone oxidoreductase subunit K.